The sequence spans 549 residues: Glucose-6-phosphate isomerase (549 aa).

Glutamate 353 serves as the catalytic Proton donor. Active-site residues include histidine 384 and lysine 513.

Belongs to the GPI family.

The protein resides in the cytoplasm. It catalyses the reaction alpha-D-glucose 6-phosphate = beta-D-fructose 6-phosphate. It functions in the pathway carbohydrate biosynthesis; gluconeogenesis. It participates in carbohydrate degradation; glycolysis; D-glyceraldehyde 3-phosphate and glycerone phosphate from D-glucose: step 2/4. Functionally, catalyzes the reversible isomerization of glucose-6-phosphate to fructose-6-phosphate. The chain is Glucose-6-phosphate isomerase from Brucella ovis (strain ATCC 25840 / 63/290 / NCTC 10512).